Here is a 593-residue protein sequence, read N- to C-terminus: Metal-response element-binding transcription factor 2 (593 aa).

A disordered region spans residues 1-24 (MRDSTGAGNSLVHKRSPLRRNQKT). The segment covering 12 to 22 (VHKRSPLRRNQ) has biased composition (basic residues). At threonine 24 the chain carries Phosphothreonine. The Tudor domain maps to 44–101 (CKFEEGQDVLARWSDGLFYLGTIKKINILKQSCFIIFEDSSKSWVLWKDIQTGATGSG). 2 consecutive PHD-type zinc fingers follow at residues 102 to 157 (EMVC…CVFA) and 201 to 255 (QCYC…CSSG). Disordered stretches follow at residues 357–410 (VAFK…GPYT) and 444–486 (GIAH…TRTG). Residue lysine 360 forms a Glycyl lysine isopeptide (Lys-Gly) (interchain with G-Cter in SUMO2) linkage. Positions 360 to 374 (KAEKEPEGTSHEFKI) are enriched in basic and acidic residues. The span at 447-470 (HSSNTSDVDLTGASSANETTSASI) shows a compositional bias: polar residues. Serine 452 bears the Phosphoserine mark. Residue lysine 522 forms a Glycyl lysine isopeptide (Lys-Gly) (interchain with G-Cter in SUMO2) linkage.

It belongs to the Polycomblike family. Associates with the PRC2 complex, which consists of the core components EED, EZH1 or EZH2, SUZ12, and RBBP4, and various combinations of accessory subunits including AEBP2, JARID2, PHF19, MTF2 and EPOP. Forms a dimeric PRC2.1 (class 1, PRC-PCL) complex consisting of at least SUZ12, RBBP4, and PHF19 or MTF2; PHF19 and MTF2 stabilize the dimeric structure which enhances PRC2 interaction with chromatin.

The protein localises to the nucleus. In terms of biological role, polycomb group (PcG) protein that specifically binds histone H3 trimethylated at 'Lys-36' (H3K36me3) and recruits the PRC2 complex, thus enhancing PRC2 H3K27me3 methylation activity. Regulates the transcriptional networks during embryonic stem cell self-renewal and differentiation. Promotes recruitment of the PRC2 complex to the inactive X chromosome in differentiating XX ES cells and PRC2 recruitment to target genes in undifferentiated ES cells. Required to repress Hox genes by enhancing H3K27me3 methylation of the PRC2 complex. In some conditions may act as an inhibitor of PRC2 activity: able to activate the CDKN2A gene and promote cellular senescence by suppressing the catalytic activity of the PRC2 complex locally. Binds to the metal-regulating-element (MRE) of MT1A gene promoter. In Mus musculus (Mouse), this protein is Metal-response element-binding transcription factor 2 (Mtf2).